We begin with the raw amino-acid sequence, 505 residues long: Nostrin (505 aa).

One can recognise an F-BAR domain in the interval 1–260 (MRDPLTDCSY…AISKIDIEKD (260 aa)). Coiled coils occupy residues 101-128 (AHQVLSAHEKKRKSLENEVEKTANLVIS), 160-222 (ITTE…RIQL), and 295-332 (KERQTSSIKSKLLRLQKDIEKASRDQEGLERMLRAYSS). The residue at position 114 (Ser-114) is a Phosphoserine. The REM-1 domain maps to 292 to 372 (AMSKERQTSS…SYKLSSVLAE (81 aa)). An SH3 domain is found at 437–496 (LGNGLCKALYPFQARQDDELDLEKGDIVTIHKKKDEGWWFGSLKGKKGHFPAAYVEELPL). Residue Ser-478 is modified to Phosphoserine.

Homotrimer. Interacts with DAB2. Interacts with NOS3, DNM2, WASL and CAV1. Interacts (via SH3 domain) with DNM2; this interaction allows the recruitment of NOS3 to dynamin-positive structures. As to expression, present in pulmonary arterial endothelial cells (at protein level).

Its subcellular location is the cell membrane. It localises to the cytoplasmic vesicle. The protein localises to the cytoplasm. The protein resides in the cytoskeleton. Multivalent adapter protein which may decrease NOS3 activity by inducing its translocation away from the plasma membrane. This Bos taurus (Bovine) protein is Nostrin.